A 319-amino-acid chain; its full sequence is Acetyl-coenzyme A carboxylase carboxyl transferase subunit alpha (319 aa).

The CoA carboxyltransferase C-terminal domain occupies 35–296 (NIDEEVHRLR…KAQLLEDLAD (262 aa)).

This sequence belongs to the AccA family. Acetyl-CoA carboxylase is a heterohexamer composed of biotin carboxyl carrier protein (AccB), biotin carboxylase (AccC) and two subunits each of ACCase subunit alpha (AccA) and ACCase subunit beta (AccD).

The protein localises to the cytoplasm. It carries out the reaction N(6)-carboxybiotinyl-L-lysyl-[protein] + acetyl-CoA = N(6)-biotinyl-L-lysyl-[protein] + malonyl-CoA. It functions in the pathway lipid metabolism; malonyl-CoA biosynthesis; malonyl-CoA from acetyl-CoA: step 1/1. Its function is as follows. Component of the acetyl coenzyme A carboxylase (ACC) complex. First, biotin carboxylase catalyzes the carboxylation of biotin on its carrier protein (BCCP) and then the CO(2) group is transferred by the carboxyltransferase to acetyl-CoA to form malonyl-CoA. In Salmonella paratyphi C (strain RKS4594), this protein is Acetyl-coenzyme A carboxylase carboxyl transferase subunit alpha.